A 94-amino-acid polypeptide reads, in one-letter code: Large ribosomal subunit protein bL28 (94 aa).

A disordered region spans residues 1–21 (MARRCEVTGRGTVSGNNVSHS). Residues 11–20 (GTVSGNNVSH) are compositionally biased toward polar residues.

It belongs to the bacterial ribosomal protein bL28 family.

This chain is Large ribosomal subunit protein bL28, found in Leptospira borgpetersenii serovar Hardjo-bovis (strain JB197).